The chain runs to 334 residues: Nucleoid-associated protein YpsIP31758_2721 (334 aa).

The protein belongs to the YejK family.

The protein resides in the cytoplasm. It is found in the nucleoid. The chain is Nucleoid-associated protein YpsIP31758_2721 from Yersinia pseudotuberculosis serotype O:1b (strain IP 31758).